The sequence spans 158 residues: Non-secretory ribonuclease (158 aa).

Positions M1 to A27 are cleaved as a signal peptide. The Proton acceptor role is filled by H42. Y60 carries the post-translational modification 3'-nitrotyrosine. Residue K65–T69 participates in substrate binding. Residues N86, N92, and N111 are each glycosylated (N-linked (GlcNAc...) asparagine). The active-site Proton donor is the H153.

This sequence belongs to the pancreatic ribonuclease family. As to quaternary structure, interacts with and forms a tight 1:1 complex with RNH1. Dimerization of two such complexes may occur.

The protein resides in the lysosome. Its subcellular location is the cytoplasmic granule. It carries out the reaction an [RNA] containing cytidine + H2O = an [RNA]-3'-cytidine-3'-phosphate + a 5'-hydroxy-ribonucleotide-3'-[RNA].. The catalysed reaction is an [RNA] containing uridine + H2O = an [RNA]-3'-uridine-3'-phosphate + a 5'-hydroxy-ribonucleotide-3'-[RNA].. This is a non-secretory ribonuclease. It is a pyrimidine specific nuclease with a slight preference for U. Cytotoxin and helminthotoxin. Possesses a wide variety of biological activities. The protein is Non-secretory ribonuclease (RNASE2) of Callithrix jacchus (White-tufted-ear marmoset).